A 666-amino-acid polypeptide reads, in one-letter code: DNA-directed RNA polymerase III subunit rpc3 (666 aa).

Disordered stretches follow at residues 130-153 (HEPH…VHSY) and 375-455 (SRLD…TESR). A compositionally biased stretch (polar residues) spans 135-153 (NGNSNETNGATNGNGVHSY). The interval 593–614 (TYKAMSRCLQRLDVEKRRKANI) is leucine-zipper.

This sequence belongs to the RNA polymerase beta chain family. In terms of assembly, component of the RNA polymerase III (Pol III) complex consisting of 17 subunits.

The protein localises to the nucleus. Its function is as follows. DNA-dependent RNA polymerase catalyzes the transcription of DNA into RNA using the four ribonucleoside triphosphates as substrates. Specific core component of RNA polymerase III which synthesizes small RNAs, such as 5S rRNA and tRNAs. The sequence is that of DNA-directed RNA polymerase III subunit rpc3 (rpc82) from Botryotinia fuckeliana (strain B05.10) (Noble rot fungus).